The chain runs to 522 residues: MIKQIFGKLPRKPSKSSHNDSNPNGEGGVNSYYIPNSGISSISKPSSKSSASNSNGANGTVIAPSSTSSNRTNQVNGVYEALPSFRDVPTSEKPNLFIKKLSMCCVVFDFNDPSKNLREKEIKRQTLLELVDYIATVSTKLSDAAMQEIAKVAVVNLFRTFPSANHESKILETLDVDDEEPALEPAWPHLQVVYELLLRFVASPMTDAKLAKRYIDHSFVLKLLDLFDSEDQREREYLKTILHRIYGKFMVHRPFIRKAINNIFYRFIFETEKHNGIAELLEILGSIINGFALPLKEEHKLFLIRALIPLHRPKCASAYHQQLSYCIVQFVEKDFKLADTVIRGLLKYWPVTNSSKEVMFLGELEEVLEATQAAEFQRCMVPLFRQIARCLNSSHFQVAERALFLWNNDHIRNLITQNHKVIMPIVFPAMERNTRGHWNQAVQSLTLNVRKVMAETDQILFDECLAKFQEDEANETEVVAKREATWKLLEELAASKSVSNEAVLVPRFSSSVTLATGKTSGS.

Residues 1–74 (MIKQIFGKLP…SSTSSNRTNQ (74 aa)) form a disordered region. A compositionally biased stretch (low complexity) spans 35–58 (PNSGISSISKPSSKSSASNSNGAN). The span at 63–74 (APSSTSSNRTNQ) shows a compositional bias: polar residues.

The protein belongs to the phosphatase 2A regulatory subunit B56 family. PP2A consists of a common heteromeric enzyme, composed of a catalytic subunit (subunits C), a constant regulatory subunit (subunit A), and a variety of regulatory subunits such as subunits B (the R2/B/PR55/B55, R3/B''/PR72/PR130/PR59 and R5/B'/B56 families). Interacts with BRI1. Interacts with IGMT1 and IGMT4. Interacts with ACO3 in the cytosol. As to expression, expressed ubiquitously at low levels. Expressed in roots, emerging lateral roots, cotyledons, leaves, floral stalks and flowers.

It localises to the cytoplasm. It is found in the cytosol. The protein resides in the nucleus. Functionally, the B regulatory subunit may modulate substrate selectivity and catalytic activity, and may also direct the localization of the catalytic enzyme to a particular subcellular compartment. Required for the formation of the PP2A holoenzyme that negatively regulates brassinosteroid signaling by dephosphorylating and inactivating BRI1 in the cytoplasm. Seems to be functionally connected with CPR5 and may mediate the negative regulation of defense reactions and senescence under low irradiances. May contribute to the epigenetic regulation of defense gene expression. Involved in the control of methoxylation of indole glucosinolates and formation of 4-methoxy- indol-3-yl-methyl glucosinolate in leaves, through direct interaction with indole glucosinolate methyltransferases. Involved in growth regulation and stress signaling. Involved in the regulation of reactive oxygen species (ROS) signaling and maintenance of cellular ROS homeostasis. Required to control the level of ACO3 phosphorylation in the cytoplasm. Regulates hydrogen peroxide metabolism by controlling the abundance of AOX1A and AXO3/AOX1D in leaf mitochondria. May mediate dephosphorylation of CRT1 and promote the degradation of unfolded proteins in endoplasmic reticulum (ER). Involved in the regulation of flowering time by repressing FLC, the main flowering repressor gene. The polypeptide is Serine/threonine protein phosphatase 2A 59 kDa regulatory subunit B' gamma isoform (B'GAMMA) (Arabidopsis thaliana (Mouse-ear cress)).